The chain runs to 420 residues: Acetylornithine aminotransferase (420 aa).

Residues 118 to 119 (GA) and Phe-151 contribute to the pyridoxal 5'-phosphate site. Residue Arg-154 coordinates N(2)-acetyl-L-ornithine. Pyridoxal 5'-phosphate is bound at residue 242-245 (DEVQ). Position 271 is an N6-(pyridoxal phosphate)lysine (Lys-271). Ser-298 contacts N(2)-acetyl-L-ornithine. Pyridoxal 5'-phosphate is bound at residue Thr-299.

Belongs to the class-III pyridoxal-phosphate-dependent aminotransferase family. ArgD subfamily. In terms of assembly, homodimer. Pyridoxal 5'-phosphate is required as a cofactor.

It localises to the cytoplasm. The catalysed reaction is N(2)-acetyl-L-ornithine + 2-oxoglutarate = N-acetyl-L-glutamate 5-semialdehyde + L-glutamate. The protein operates within amino-acid biosynthesis; L-arginine biosynthesis; N(2)-acetyl-L-ornithine from L-glutamate: step 4/4. This Parasynechococcus marenigrum (strain WH8102) protein is Acetylornithine aminotransferase.